A 248-amino-acid polypeptide reads, in one-letter code: MSCLLAIDAGNTRTKWAVLQYETGEILQRGVLNDDMPAEWALCERVAVANVAGPNRQALLEARLKLLGLPVRWHASTLHACGVSNGYAIPAQLGVDRWAAMIAAWQHYQRSCLVVNAGTALTVDMIESTAPGQACFLGGIIMPGIRLMQESLASAAANIGAMHGVFRDFPLSTQDAVCSGSLHAGAGAINNLLTLLGERCGEAIPCILSGGDAVALLPLLQKHILHSEFCLEENLVLQGLWYMERGLP.

Residue 8–15 (DAGNTRTK) participates in ATP binding. Residues Tyr87 and 94–97 (GVDR) each bind substrate. Catalysis depends on Asp96, which acts as the Proton acceptor. Thr119 is an ATP binding site. A substrate-binding site is contributed by Thr173.

It belongs to the type III pantothenate kinase family. As to quaternary structure, homodimer. It depends on NH4(+) as a cofactor. The cofactor is K(+).

It is found in the cytoplasm. It catalyses the reaction (R)-pantothenate + ATP = (R)-4'-phosphopantothenate + ADP + H(+). The protein operates within cofactor biosynthesis; coenzyme A biosynthesis; CoA from (R)-pantothenate: step 1/5. Its function is as follows. Catalyzes the phosphorylation of pantothenate (Pan), the first step in CoA biosynthesis. The polypeptide is Type III pantothenate kinase (Methylobacillus flagellatus (strain ATCC 51484 / DSM 6875 / VKM B-1610 / KT)).